Here is a 521-residue protein sequence, read N- to C-terminus: Glucose-6-phosphate isomerase (521 aa).

E327 serves as the catalytic Proton donor. Active-site residues include H358 and K486.

It belongs to the GPI family.

It is found in the cytoplasm. It catalyses the reaction alpha-D-glucose 6-phosphate = beta-D-fructose 6-phosphate. It participates in carbohydrate biosynthesis; gluconeogenesis. Its pathway is carbohydrate degradation; glycolysis; D-glyceraldehyde 3-phosphate and glycerone phosphate from D-glucose: step 2/4. Its function is as follows. Catalyzes the reversible isomerization of glucose-6-phosphate to fructose-6-phosphate. This chain is Glucose-6-phosphate isomerase, found in Bordetella bronchiseptica (strain ATCC BAA-588 / NCTC 13252 / RB50) (Alcaligenes bronchisepticus).